We begin with the raw amino-acid sequence, 340 residues long: GTP 3',8-cyclase (340 aa).

Residues 8–227 form the Radical SAM core domain; the sequence is KLGRPIRDLR…TMIEQHFEID (220 aa). Arginine 17 is a GTP binding site. The [4Fe-4S] cluster site is built by cysteine 24 and cysteine 28. Residue tyrosine 30 participates in S-adenosyl-L-methionine binding. Residue cysteine 31 participates in [4Fe-4S] cluster binding. Residue arginine 71 coordinates GTP. Residue glycine 75 participates in S-adenosyl-L-methionine binding. Position 102 (threonine 102) interacts with GTP. Residue serine 126 participates in S-adenosyl-L-methionine binding. Lysine 163 provides a ligand contact to GTP. An S-adenosyl-L-methionine-binding site is contributed by methionine 197. Residues cysteine 261 and cysteine 264 each coordinate [4Fe-4S] cluster. GTP is bound at residue 266-268; the sequence is RAR. Cysteine 278 is a binding site for [4Fe-4S] cluster.

It belongs to the radical SAM superfamily. MoaA family. In terms of assembly, monomer and homodimer. Requires [4Fe-4S] cluster as cofactor.

The catalysed reaction is GTP + AH2 + S-adenosyl-L-methionine = (8S)-3',8-cyclo-7,8-dihydroguanosine 5'-triphosphate + 5'-deoxyadenosine + L-methionine + A + H(+). It participates in cofactor biosynthesis; molybdopterin biosynthesis. Its function is as follows. Catalyzes the cyclization of GTP to (8S)-3',8-cyclo-7,8-dihydroguanosine 5'-triphosphate. The protein is GTP 3',8-cyclase of Staphylococcus aureus (strain USA300).